A 199-amino-acid chain; its full sequence is Ribosome maturation factor RimM (199 aa).

One can recognise a PRC barrel domain in the interval 100–195 (ADEWYPKDLI…YLTLDPPGGL (96 aa)).

The protein belongs to the RimM family. As to quaternary structure, binds ribosomal protein uS19.

It localises to the cytoplasm. Its function is as follows. An accessory protein needed during the final step in the assembly of 30S ribosomal subunit, possibly for assembly of the head region. Essential for efficient processing of 16S rRNA. May be needed both before and after RbfA during the maturation of 16S rRNA. It has affinity for free ribosomal 30S subunits but not for 70S ribosomes. This is Ribosome maturation factor RimM from Bifidobacterium longum (strain DJO10A).